Here is a 316-residue protein sequence, read N- to C-terminus: 4-hydroxyphenylacetate decarboxylase activating enzyme (316 aa).

Residues 20 to 307 form the Radical SAM core domain; sequence HDGPGCRTTV…QDIFLDNGIA (288 aa). Residues cysteine 34, cysteine 38, cysteine 41, cysteine 60, cysteine 66, cysteine 69, and cysteine 105 each contribute to the [4Fe-4S] cluster site. 40–42 contributes to the S-adenosyl-L-methionine binding site; that stretch reads WCA. The 32-residue stretch at 84–115 folds into the 4Fe-4S ferredoxin-type domain; that stretch reads NKPVIDWNICKDCESFECVNSCYYNAFKLCAK. Residues glycine 144, 193 to 195, and histidine 267 each bind S-adenosyl-L-methionine; that span reads DIK.

Belongs to the organic radical-activating enzymes family. As to quaternary structure, monomer. It depends on [4Fe-4S] cluster as a cofactor.

The enzyme catalyses glycyl-[protein] + reduced [flavodoxin] + S-adenosyl-L-methionine = glycin-2-yl radical-[protein] + semiquinone [flavodoxin] + 5'-deoxyadenosine + L-methionine + H(+). Functionally, catalyzes activation of 4-hydroxyphenylacetate decarboxylase under anaerobic conditions by generation of an organic free radical on a glycine residue, via a homolytic cleavage of S-adenosyl-L-methionine (SAM). This chain is 4-hydroxyphenylacetate decarboxylase activating enzyme, found in Clostridioides difficile (strain CD196) (Peptoclostridium difficile).